The chain runs to 609 residues: Elongation factor 4 (609 aa).

One can recognise a tr-type G domain in the interval 5-187 (SKIRNFSIIA…AIVAKIPPPE (183 aa)). Residues 17-22 (DHGKST) and 134-137 (NKID) each bind GTP.

Belongs to the TRAFAC class translation factor GTPase superfamily. Classic translation factor GTPase family. LepA subfamily.

Its subcellular location is the cell inner membrane. The catalysed reaction is GTP + H2O = GDP + phosphate + H(+). Its function is as follows. Required for accurate and efficient protein synthesis under certain stress conditions. May act as a fidelity factor of the translation reaction, by catalyzing a one-codon backward translocation of tRNAs on improperly translocated ribosomes. Back-translocation proceeds from a post-translocation (POST) complex to a pre-translocation (PRE) complex, thus giving elongation factor G a second chance to translocate the tRNAs correctly. Binds to ribosomes in a GTP-dependent manner. The protein is Elongation factor 4 of Erythrobacter litoralis (strain HTCC2594).